An 880-amino-acid polypeptide reads, in one-letter code: GRB2-associated and regulator of MAPK protein 2 (880 aa).

The tract at residues arginine 12–arginine 320 is CABIT. 5 disordered regions span residues proline 385–serine 407, isoleucine 461–valine 483, serine 527–serine 548, serine 569–proline 611, and alanine 633–glutamine 713. Low complexity-rich tracts occupy residues proline 640–glycine 663 and glutamine 683–serine 696. The residue at position 740 (serine 740) is a Phosphoserine. Residues serine 813–arginine 877 enclose the SAM domain.

This sequence belongs to the GAREM family.

Functionally, probable adapter protein that provides a critical link between cell surface epidermal growth factor receptor and the MAPK/ERK signaling pathway. In Mus musculus (Mouse), this protein is GRB2-associated and regulator of MAPK protein 2 (Garem2).